We begin with the raw amino-acid sequence, 396 residues long: Tryptophan synthase beta chain (396 aa).

Lysine 86 bears the N6-(pyridoxal phosphate)lysine mark.

Belongs to the TrpB family. As to quaternary structure, tetramer of two alpha and two beta chains. Pyridoxal 5'-phosphate serves as cofactor.

The catalysed reaction is (1S,2R)-1-C-(indol-3-yl)glycerol 3-phosphate + L-serine = D-glyceraldehyde 3-phosphate + L-tryptophan + H2O. It participates in amino-acid biosynthesis; L-tryptophan biosynthesis; L-tryptophan from chorismate: step 5/5. Functionally, the beta subunit is responsible for the synthesis of L-tryptophan from indole and L-serine. The polypeptide is Tryptophan synthase beta chain (Vibrio campbellii (strain ATCC BAA-1116)).